The following is a 558-amino-acid chain: Protein NRT1/ PTR FAMILY 2.3 (558 aa).

12 helical membrane passes run 33-53 (TLLG…VFLI), 69-89 (VANG…DSFF), 92-112 (IPVI…LTLI), 128-148 (VLCT…LALV), 176-196 (FFNW…TAIV), 203-223 (SWKL…IVFV), 329-349 (LWLS…LIVL), 371-391 (VIII…VFPM), 403-423 (LQKV…SAVV), 439-459 (VLWL…QFPA), 478-498 (SLTS…IDLI), and 517-537 (VYWL…VCSW).

Belongs to the major facilitator superfamily. Proton-dependent oligopeptide transporter (POT/PTR) (TC 2.A.17) family. As to expression, expressed in flowers, siliques and root epidermis or cortex. Detected in shoots.

Its subcellular location is the membrane. Its function is as follows. Transporter involved in a passive nitrate efflux. The sequence is that of Protein NRT1/ PTR FAMILY 2.3 (NPF2.3) from Arabidopsis thaliana (Mouse-ear cress).